Reading from the N-terminus, the 404-residue chain is Riboflavin biosynthesis protein RibBA (404 aa).

Residues Met-1–Lys-204 form a DHBP synthase region. D-ribulose 5-phosphate is bound by residues Arg-30–Glu-31, Asp-35, Arg-143–Thr-147, and Glu-167. Position 31 (Glu-31) interacts with Mg(2+). His-146 provides a ligand contact to Mg(2+). Residues Gln-205–Lys-404 form a GTP cyclohydrolase II region. A GTP-binding site is contributed by Arg-255–Ser-259. Zn(2+)-binding residues include Cys-260, Cys-271, and Cys-273. GTP-binding positions include Gln-276, Glu-298–Arg-300, and Thr-320. Residue Asp-332 is the Proton acceptor; for GTP cyclohydrolase activity of the active site. Arg-334 serves as the catalytic Nucleophile; for GTP cyclohydrolase activity. GTP-binding residues include Thr-355 and Lys-360.

The protein in the N-terminal section; belongs to the DHBP synthase family. In the C-terminal section; belongs to the GTP cyclohydrolase II family. Mg(2+) is required as a cofactor. Requires Mn(2+) as cofactor. Zn(2+) serves as cofactor.

The catalysed reaction is D-ribulose 5-phosphate = (2S)-2-hydroxy-3-oxobutyl phosphate + formate + H(+). It catalyses the reaction GTP + 4 H2O = 2,5-diamino-6-hydroxy-4-(5-phosphoribosylamino)-pyrimidine + formate + 2 phosphate + 3 H(+). It functions in the pathway cofactor biosynthesis; riboflavin biosynthesis; 2-hydroxy-3-oxobutyl phosphate from D-ribulose 5-phosphate: step 1/1. Its pathway is cofactor biosynthesis; riboflavin biosynthesis; 5-amino-6-(D-ribitylamino)uracil from GTP: step 1/4. In terms of biological role, catalyzes the conversion of D-ribulose 5-phosphate to formate and 3,4-dihydroxy-2-butanone 4-phosphate. Catalyzes the conversion of GTP to 2,5-diamino-6-ribosylamino-4(3H)-pyrimidinone 5'-phosphate (DARP), formate and pyrophosphate. The chain is Riboflavin biosynthesis protein RibBA from Phocaeicola vulgatus (strain ATCC 8482 / DSM 1447 / JCM 5826 / CCUG 4940 / NBRC 14291 / NCTC 11154) (Bacteroides vulgatus).